Reading from the N-terminus, the 376-residue chain is Chaperone protein DnaJ (376 aa).

A J domain is found at 5–70 (DYYEILGVSK…QKRAAYDQYG (66 aa)). The segment at 131–209 (GVTKEIRIPT…CHGHGRVERS (79 aa)) adopts a CR-type zinc-finger fold. Zn(2+)-binding residues include C144, C147, C161, C164, C183, C186, C197, and C200. CXXCXGXG motif repeat units follow at residues 144–151 (CDVCHGSG), 161–168 (CPTCHGSG), 183–190 (CPHCQGRG), and 197–204 (CNKCHGHG).

This sequence belongs to the DnaJ family. In terms of assembly, homodimer. It depends on Zn(2+) as a cofactor.

The protein localises to the cytoplasm. Functionally, participates actively in the response to hyperosmotic and heat shock by preventing the aggregation of stress-denatured proteins and by disaggregating proteins, also in an autonomous, DnaK-independent fashion. Unfolded proteins bind initially to DnaJ; upon interaction with the DnaJ-bound protein, DnaK hydrolyzes its bound ATP, resulting in the formation of a stable complex. GrpE releases ADP from DnaK; ATP binding to DnaK triggers the release of the substrate protein, thus completing the reaction cycle. Several rounds of ATP-dependent interactions between DnaJ, DnaK and GrpE are required for fully efficient folding. Also involved, together with DnaK and GrpE, in the DNA replication of plasmids through activation of initiation proteins. This chain is Chaperone protein DnaJ, found in Shigella flexneri serotype 5b (strain 8401).